Consider the following 60-residue polypeptide: uncharacterized protein (60 aa).

It localises to the host cytoplasm. This is an uncharacterized protein from Escherichia phage Mu (Bacteriophage Mu).